Consider the following 146-residue polypeptide: Hemoglobin subunit beta (146 aa).

The region spanning 2–146 (HWTADEKQLI…VAHALALGYH (145 aa)) is the Globin domain. Heme b contacts are provided by His63 and His92.

Belongs to the globin family. Heterotetramer of two alpha chains and two beta chains. In terms of tissue distribution, red blood cells.

In terms of biological role, involved in oxygen transport from the lung to the various peripheral tissues. This Chrysemys picta bellii (Western painted turtle) protein is Hemoglobin subunit beta (HBB).